The sequence spans 462 residues: Cysteine proteinase RD21A (462 aa).

The N-terminal stretch at 1–21 (MGFLKPTMAILFLAMVAVSSA) is a signal peptide. A propeptide spans 22 to 136 (VDMSIISYDE…LRYEARVGDE (115 aa)) (activation peptide). Asn90 carries an N-linked (GlcNAc...) asparagine glycan. Cystine bridges form between Cys158-Cys200, Cys192-Cys233, Cys291-Cys342, Cys375-Cys387, and Cys381-Cys402. Cys161 is an active-site residue. Catalysis depends on residues His297 and Asn317. Positions 353 to 462 (KNGENPPNPG…FWSQGRKNIA (110 aa)) are cleaved as a propeptide — removed in mature form. Asn414 is a glycosylation site (N-linked (GlcNAc...) asparagine).

This sequence belongs to the peptidase C1 family. As to quaternary structure, interacts with SERPIN1. Interacts with PRN2. Interacts with WSCP. Interacts with TZF4, TZF5 and TZF6.

It is found in the vacuole. The protein localises to the golgi apparatus. The protein resides in the cytoplasm. Its subcellular location is the stress granule. It localises to the P-body. Its activity is regulated as follows. Inhibited by the cysteine protease inhibitor E64 (L-trans-epoxysuccinyl-leucylamide-(4-guanido)-butane). Cysteine protease that plays a role in immunity, senescence, and biotic and abiotic stresses. Involved in immunity against the necrotrophic fungal pathogen Botrytis cinerea. Involved in elicitor-stimulated programmed cell death (PCD). During infection by the necrotrophic fungal pathogen Botrytis cinerea, functions as a PCD-promoting protease that is released from the ER body or vacuole to the cytoplasm. Accumulates in endoplasmic reticulum-derived bodies in epidermal cells and may participate in cell death in stressed or injured cells. Involved in water stress-induced cell death through its protease activity that is released to the cytoplasm after vacuolar collapse. Possesses protease activity in vitro and is involved in cell death in the transmitting tract and septum epidermis during flower development. Possesses peptide ligase activity. Can ligate peptides to unmodified N-termini of acceptor proteins. Probably ligates through a thioester intermediate. This is Cysteine proteinase RD21A from Arabidopsis thaliana (Mouse-ear cress).